Consider the following 176-residue polypeptide: ADP-ribosylation factor-like protein 11 (176 aa).

Glycine 2 carries the N-myristoyl glycine lipid modification. GTP contacts are provided by residues 19–26 (GLDSAGKT), 63–67 (DIGGQ), and 122–125 (NKQE).

The protein belongs to the small GTPase superfamily. Arf family.

In terms of biological role, may play a role in apoptosis. May act as a tumor suppressor. This chain is ADP-ribosylation factor-like protein 11 (Arl11), found in Mus musculus (Mouse).